The following is a 270-amino-acid chain: Zinc transporter ZupT (270 aa).

8 consecutive transmembrane segments (helical) span residues 8 to 28 (ILVVFLLTTLAGLATGIGGFI), 40 to 60 (LTFALGLSGGVMVYISLVELL), 78 to 98 (WIAIASFFGGIAVAALIDYLV), 131 to 151 (ILFALAIGIHNFPEGIATFAA), 162 to 182 (IALAVAVHNIPEGIAVAVPLY), 192 to 212 (LFYSFLSGLAEPVGAAIAMFF), 216 to 236 (FLTPTVLAVLFASVAGIMVFI), and 250 to 270 (HHHISIMGIIAGMLLMAIVLI). Fe(2+) is bound by residues asparagine 141 and glutamate 144. Residues glutamate 144 and histidine 169 each coordinate Zn(2+). Residues asparagine 170, glutamate 173, and glutamate 202 each coordinate Fe(2+). Glutamate 173 is a binding site for Zn(2+).

It belongs to the ZIP transporter (TC 2.A.5) family. ZupT subfamily.

It is found in the cell membrane. It carries out the reaction Zn(2+)(in) = Zn(2+)(out). In terms of biological role, mediates zinc uptake. May also transport other divalent cations. This chain is Zinc transporter ZupT, found in Akkermansia muciniphila (strain ATCC BAA-835 / DSM 22959 / JCM 33894 / BCRC 81048 / CCUG 64013 / CIP 107961 / Muc).